Here is a 557-residue protein sequence, read N- to C-terminus: DNA replication factor Cdt1 (557 aa).

A PIP-box K+4 motif motif is present at residues 1-25; the sequence is MAQSRVTDFYACRRPGLTTPRAKSI. The disordered stretch occupies residues 20-113; that stretch reads PRAKSICLTP…VCPSPVKRTK (94 aa). Residue T28 is modified to Phosphothreonine; by MAPK8. Position 30 is a phosphoserine (S30). A Cyclin-binding motif motif is present at residues 65 to 67; that stretch reads RRL. The span at 69 to 81 shows a compositional bias: low complexity; the sequence is LPGLDSCPSSLPE. Positions 82–106 are enriched in pro residues; sequence PSSPAEPSPPADPSPPADPGSPVCP. The residue at position 107 (S107) is a Phosphoserine; by MAPK8. The segment at 163-203 is interaction with GMNN; sequence PSTPDAKVPTEQPCVEKAPAYQRFHALAQPGLPGLVLPYKY. Phosphoserine is present on S392. Residues 397–427 form a disordered region; that stretch reads RSAEPGSPGTSTPPLPATPPATPPAASPSAL. Over residues 407–422 the composition is skewed to pro residues; sequence STPPLPATPPATPPAA. Positions 463–557 are interaction with LRWD1; it reads LERLPELARV…LAHHVHAEGL (95 aa).

It belongs to the Cdt1 family. As to quaternary structure, interacts with GMNN; the interaction inhibits the binding of the MCM complex to origins of replication. Interacts with MCM6. Interacts with CDC6; are mutually dependent on one another for loading MCM complexes onto chromatin. Interacts with PCNA. Interacts with LRWD1 during G1 phase and during mitosis. Interacts with NDC80 subunit of the NDC80 complex; leading to kinetochore localization. Interacts with KAT7. Interacts with ubiquitin-binding protein FAF1; the interaction is likely to promote CDT1 degradation. In terms of processing, two independent E3 ubiquitin ligase complexes, SCF(SKP2) and the DCX(DTL) complex, mediated CDT1 degradation in S phase. Ubiquitinated by the DCX(DTL) complex, in response to DNA damage, leading to its degradation. Ubiquitination by the DCX(DTL) complex is necessary to ensure proper cell cycle regulation and is PCNA-dependent: interacts with PCNA via its PIP-box, while the presence of the containing the 'K+4' motif in the PIP box, recruit the DCX(DTL) complex, leading to its degradation. Phosphorylation at Thr-28 by CDK2 targets CDT1 for ubiquitynation by SCF(SKP2) E3 ubiquitin ligase and subsequent degradation. The interaction with GMNN protects it against ubiquitination. Deubiquitinated by USP37. Ubiquitinated and degraded by the SCF(FBXO31) complex during the G2 phase to prevent re-replication. Post-translationally, phosphorylation by cyclin A-dependent kinases at Thr-28 targets CDT1 for ubiquitynation by SCF(SKP2) E3 ubiquitin ligase and subsequent degradation. Phosphorylated at Thr-28 by MAPK8/JNK1, which blocks replication licensing in response to stress. Binding to GMNN is not affected by phosphorylation.

It localises to the nucleus. The protein localises to the chromosome. It is found in the centromere. The protein resides in the kinetochore. Required for both DNA replication and mitosis. DNA replication licensing factor, required for pre-replication complex assembly. Cooperates with CDC6 and the origin recognition complex (ORC) during G1 phase of the cell cycle to promote the loading of the mini-chromosome maintenance (MCM) complex onto DNA to generate pre-replication complexes (pre-RC). Required also for mitosis by promoting stable kinetochore-microtubule attachments. Potential oncogene. The sequence is that of DNA replication factor Cdt1 from Mus musculus (Mouse).